The sequence spans 273 residues: Putative pyruvate, phosphate dikinase regulatory protein (273 aa).

ADP is bound at residue 149–156 (GPSRTSKT).

The protein belongs to the pyruvate, phosphate/water dikinase regulatory protein family. PDRP subfamily.

It carries out the reaction N(tele)-phospho-L-histidyl/L-threonyl-[pyruvate, phosphate dikinase] + ADP = N(tele)-phospho-L-histidyl/O-phospho-L-threonyl-[pyruvate, phosphate dikinase] + AMP + H(+). It catalyses the reaction N(tele)-phospho-L-histidyl/O-phospho-L-threonyl-[pyruvate, phosphate dikinase] + phosphate + H(+) = N(tele)-phospho-L-histidyl/L-threonyl-[pyruvate, phosphate dikinase] + diphosphate. Functionally, bifunctional serine/threonine kinase and phosphorylase involved in the regulation of the pyruvate, phosphate dikinase (PPDK) by catalyzing its phosphorylation/dephosphorylation. The protein is Putative pyruvate, phosphate dikinase regulatory protein of Rickettsia prowazekii (strain Madrid E).